Consider the following 346-residue polypeptide: Heparan sulfate glucosamine 3-O-sulfotransferase 5 (346 aa).

Topologically, residues 1–12 are cytoplasmic; sequence MLFKQQAWLRQK. Residues 13–32 traverse the membrane as a helical; Signal-anchor for type II membrane protein segment; that stretch reads LLVLGSLAVGSLLYLVARVG. Residues 33–346 lie on the Lumenal side of the membrane; it reads SLDRLQPICP…QITGRTLNWP (314 aa). 100–104 contacts 3'-phosphoadenylyl sulfate; that stretch reads KGGTR. Substrate-binding positions include 122–128 and 155–158; these read EIHFFDN and KSPA. Residues Arg-183 and Ser-191 each contribute to the 3'-phosphoadenylyl sulfate site. Residue 226–227 participates in substrate binding; sequence YK. N-linked (GlcNAc...) asparagine glycosylation occurs at Asn-287. 3'-phosphoadenylyl sulfate is bound at residue Tyr-293. Cys-294 and Cys-304 are disulfide-bonded. Position 309-313 (309-313) interacts with 3'-phosphoadenylyl sulfate; the sequence is KGRIH.

This sequence belongs to the sulfotransferase 1 family. In terms of tissue distribution, highly expressed in skeletal muscle and fetal brain, and also found in adult brain, spinal cord, cerebellum and colon.

It localises to the golgi apparatus membrane. The catalysed reaction is alpha-D-glucosaminyl-[heparan sulfate](n) + 3'-phosphoadenylyl sulfate = 3-sulfo-alpha-D-glucosaminyl-[heparan sulfate](n) + adenosine 3',5'-bisphosphate + H(+). Sulfotransferase that utilizes 3'-phospho-5'-adenylyl sulfate (PAPS) to catalyze the transfer of a sulfo group to position 3 of glucosamine residues in heparan. Catalyzes the rate limiting step in the biosynthesis of heparan sulfate (HSact). This modification is a crucial step in the biosynthesis of anticoagulant heparan sulfate as it completes the structure of the antithrombin pentasaccharide binding site. Also generates GlcUA-GlcNS or IdoUA-GlcNS and IdoUA2S-GlcNH2. The substrate-specific O-sulfation generates an enzyme-modified heparan sulfate which acts as a binding receptor to Herpes simplex virus-1 (HSV-1) and permits its entry. This Homo sapiens (Human) protein is Heparan sulfate glucosamine 3-O-sulfotransferase 5 (HS3ST5).